Here is a 185-residue protein sequence, read N- to C-terminus: Elongation factor P (185 aa).

Belongs to the elongation factor P family.

It localises to the cytoplasm. The protein operates within protein biosynthesis; polypeptide chain elongation. Functionally, involved in peptide bond synthesis. Stimulates efficient translation and peptide-bond synthesis on native or reconstituted 70S ribosomes in vitro. Probably functions indirectly by altering the affinity of the ribosome for aminoacyl-tRNA, thus increasing their reactivity as acceptors for peptidyl transferase. This chain is Elongation factor P, found in Acaryochloris marina (strain MBIC 11017).